A 284-amino-acid polypeptide reads, in one-letter code: Pantothenate synthetase (284 aa).

Position 30–37 (30–37 (MGNLHEGH)) interacts with ATP. Catalysis depends on His37, which acts as the Proton donor. Gln61 serves as a coordination point for (R)-pantoate. Residue Gln61 coordinates beta-alanine. Residue 149 to 152 (GEKD) coordinates ATP. Gln155 provides a ligand contact to (R)-pantoate. Residues Val178 and 186–189 (LSSR) contribute to the ATP site.

It belongs to the pantothenate synthetase family. As to quaternary structure, homodimer.

It is found in the cytoplasm. The catalysed reaction is (R)-pantoate + beta-alanine + ATP = (R)-pantothenate + AMP + diphosphate + H(+). Its pathway is cofactor biosynthesis; (R)-pantothenate biosynthesis; (R)-pantothenate from (R)-pantoate and beta-alanine: step 1/1. Functionally, catalyzes the condensation of pantoate with beta-alanine in an ATP-dependent reaction via a pantoyl-adenylate intermediate. In Sodalis glossinidius (strain morsitans), this protein is Pantothenate synthetase.